The chain runs to 312 residues: Olfactory receptor 2L8 (312 aa).

Residues 1-24 (MENYNQTSTDFILLGLFPPSRIDL) lie on the Extracellular side of the membrane. N-linked (GlcNAc...) asparagine glycosylation occurs at Asn5. Residues 25–48 (FFFILIVFIFLMALIGNLSMILLI) form a helical membrane-spanning segment. The Cytoplasmic segment spans residues 49–56 (FLDTHLHT). The helical transmembrane segment at 57 to 78 (PMYFLLSQLSLIDLNYISTIVP) threads the bilayer. Residues 79 to 99 (KMASDFLHGNKSISFTGCGIQ) lie on the Extracellular side of the membrane. N-linked (GlcNAc...) asparagine glycosylation occurs at Asn88. Cys96 and Cys188 are joined by a disulfide. The chain crosses the membrane as a helical span at residues 100–119 (SFFFLALGGAEALLLASMAY). The Cytoplasmic portion of the chain corresponds to 120-138 (DRYIAICFPLHYLIRMSKR). A helical membrane pass occupies residues 139–157 (VCVLMITGSWIIGSINACA). Topologically, residues 158–194 (HTVYVLHIPYCRSRAINHFFCDVPAMVTLACMDTWVY) are extracellular. A helical membrane pass occupies residues 195 to 218 (EGTVFLSATIFLVFPFIGISCSYG). Topologically, residues 219 to 235 (QVLFAVYHMKSAEGRKK) are cytoplasmic. The chain crosses the membrane as a helical span at residues 236–258 (AYLTCSTHLTVVTFYYAPFVYTY). Topologically, residues 259-271 (LRPRSLRSPTEDK) are extracellular. Residues 272–291 (VLAVFYTILTPMLNPIIYSL) traverse the membrane as a helical segment. Over 292-312 (RNKEVMGALTRVSQRICSVKM) the chain is Cytoplasmic.

This sequence belongs to the G-protein coupled receptor 1 family.

The protein resides in the cell membrane. Its function is as follows. Odorant receptor. The protein is Olfactory receptor 2L8 (OR2L8) of Homo sapiens (Human).